A 508-amino-acid chain; its full sequence is Photosystem II CP47 reaction center protein (508 aa).

Transmembrane regions (helical) follow at residues 21–36, 101–115, 140–156, 203–218, 237–252, and 457–472; these read SVHI…WAGS, IVFS…IWHW, GIHL…FGAF, IAAG…FHLS, VLSS…AFVV, and SFAL…HGAR.

Belongs to the PsbB/PsbC family. PsbB subfamily. In terms of assembly, PSII is composed of 1 copy each of membrane proteins PsbA, PsbB, PsbC, PsbD, PsbE, PsbF, PsbH, PsbI, PsbJ, PsbK, PsbL, PsbM, PsbT, PsbX, PsbY, PsbZ, Psb30/Ycf12, at least 3 peripheral proteins of the oxygen-evolving complex and a large number of cofactors. It forms dimeric complexes. It depends on Binds multiple chlorophylls. PSII binds additional chlorophylls, carotenoids and specific lipids. as a cofactor.

The protein localises to the plastid. The protein resides in the chloroplast thylakoid membrane. In terms of biological role, one of the components of the core complex of photosystem II (PSII). It binds chlorophyll and helps catalyze the primary light-induced photochemical processes of PSII. PSII is a light-driven water:plastoquinone oxidoreductase, using light energy to abstract electrons from H(2)O, generating O(2) and a proton gradient subsequently used for ATP formation. This chain is Photosystem II CP47 reaction center protein, found in Olimarabidopsis pumila (Dwarf rocket).